We begin with the raw amino-acid sequence, 101 residues long: Putative pterin-4-alpha-carbinolamine dehydratase (101 aa).

Belongs to the pterin-4-alpha-carbinolamine dehydratase family.

The enzyme catalyses (4aS,6R)-4a-hydroxy-L-erythro-5,6,7,8-tetrahydrobiopterin = (6R)-L-erythro-6,7-dihydrobiopterin + H2O. In Rhodopseudomonas palustris (strain BisA53), this protein is Putative pterin-4-alpha-carbinolamine dehydratase.